The sequence spans 185 residues: Ribosome maturation factor RimM (185 aa).

Positions 106 to 185 (SGEYYWKDLL…IIEVDWDPGF (80 aa)) constitute a PRC barrel domain.

It belongs to the RimM family. In terms of assembly, binds ribosomal protein uS19.

It is found in the cytoplasm. Its function is as follows. An accessory protein needed during the final step in the assembly of 30S ribosomal subunit, possibly for assembly of the head region. Essential for efficient processing of 16S rRNA. May be needed both before and after RbfA during the maturation of 16S rRNA. It has affinity for free ribosomal 30S subunits but not for 70S ribosomes. The chain is Ribosome maturation factor RimM from Sodalis glossinidius (strain morsitans).